The primary structure comprises 140 residues: Virion protein 5 (140 aa).

It localises to the virion. The polypeptide is Virion protein 5 (Enterococcus faecalis (Streptococcus faecalis)).